A 314-amino-acid polypeptide reads, in one-letter code: Homoserine kinase (314 aa).

An ATP-binding site is contributed by 96-106 (PIGSGLGSSAC).

The protein belongs to the GHMP kinase family. Homoserine kinase subfamily.

It is found in the cytoplasm. It catalyses the reaction L-homoserine + ATP = O-phospho-L-homoserine + ADP + H(+). The protein operates within amino-acid biosynthesis; L-threonine biosynthesis; L-threonine from L-aspartate: step 4/5. Catalyzes the ATP-dependent phosphorylation of L-homoserine to L-homoserine phosphate. The sequence is that of Homoserine kinase from Mannheimia succiniciproducens (strain KCTC 0769BP / MBEL55E).